The following is a 60-amino-acid chain: Large ribosomal subunit protein bL32 (60 aa).

The disordered stretch occupies residues 1 to 60; the sequence is MAVQQNKKSRSARDMRRSHDALEPNALSVEKSTGEVHLRHHVSPDGFYRGRKVIDKGADE. A compositionally biased stretch (basic and acidic residues) spans 11–22; sequence SARDMRRSHDAL.

This sequence belongs to the bacterial ribosomal protein bL32 family.

This Stutzerimonas stutzeri (strain A1501) (Pseudomonas stutzeri) protein is Large ribosomal subunit protein bL32.